Consider the following 282-residue polypeptide: Ribonuclease 3 (282 aa).

The RNase III domain maps to 18-141 (FVAFFKSLNI…LVAAIYEDLG (124 aa)). Glutamate 59 serves as a coordination point for Mg(2+). Aspartate 63 is an active-site residue. Mg(2+) contacts are provided by aspartate 127 and glutamate 130. Glutamate 130 is a catalytic residue.

It belongs to the ribonuclease III family. In terms of assembly, homodimer. Mg(2+) is required as a cofactor.

Its subcellular location is the cytoplasm. The enzyme catalyses Endonucleolytic cleavage to 5'-phosphomonoester.. In terms of biological role, digests double-stranded RNA. Involved in the processing of primary rRNA transcript to yield the immediate precursors to the large and small rRNAs (23S and 16S). Processes some mRNAs, and tRNAs when they are encoded in the rRNA operon. Processes pre-crRNA and tracrRNA of type II CRISPR loci if present in the organism. The protein is Ribonuclease 3 of Mycoplasmoides pneumoniae (strain ATCC 15531 / DSM 23978 / CIP 103766 / NBRC 14401 / NCTC 10119 / FH) (Mycoplasma pneumoniae).